The primary structure comprises 23 residues: Basic phospholipase A2 homolog (23 aa).

In terms of processing, contains 7 disulfide bonds. Expressed by the venom gland.

Its subcellular location is the secreted. The protein is Basic phospholipase A2 homolog of Trimeresurus stejnegeri (Chinese green tree viper).